The sequence spans 336 residues: Glycerol-3-phosphate dehydrogenase [NAD(P)+] (336 aa).

Positions 11, 12, 33, 34, and 107 each coordinate NADPH. 2 residues coordinate sn-glycerol 3-phosphate: Lys-107 and Gly-137. Ala-141 contributes to the NADPH binding site. Sn-glycerol 3-phosphate contacts are provided by Lys-192, Asp-245, Ser-255, Arg-256, and Asn-257. Lys-192 functions as the Proton acceptor in the catalytic mechanism. Residue Arg-256 participates in NADPH binding. Glu-282 contributes to the NADPH binding site.

This sequence belongs to the NAD-dependent glycerol-3-phosphate dehydrogenase family.

It is found in the cytoplasm. It catalyses the reaction sn-glycerol 3-phosphate + NAD(+) = dihydroxyacetone phosphate + NADH + H(+). It carries out the reaction sn-glycerol 3-phosphate + NADP(+) = dihydroxyacetone phosphate + NADPH + H(+). It participates in membrane lipid metabolism; glycerophospholipid metabolism. Functionally, catalyzes the reduction of the glycolytic intermediate dihydroxyacetone phosphate (DHAP) to sn-glycerol 3-phosphate (G3P), the key precursor for phospholipid synthesis. This Thermobifida fusca (strain YX) protein is Glycerol-3-phosphate dehydrogenase [NAD(P)+].